We begin with the raw amino-acid sequence, 455 residues long: Probable 1,4-beta-D-glucan cellobiohydrolase A (455 aa).

The first 17 residues, 1–17 (MHQRALLFSAFWTAVQA), serve as a signal peptide directing secretion. An N-linked (GlcNAc...) asparagine glycan is attached at Asn-81. The Nucleophile role is filled by Glu-227. The Proton donor role is filled by Glu-232. Asn-285 carries N-linked (GlcNAc...) asparagine glycosylation.

This sequence belongs to the glycosyl hydrolase 7 (cellulase C) family.

Its subcellular location is the secreted. The catalysed reaction is Hydrolysis of (1-&gt;4)-beta-D-glucosidic linkages in cellulose and cellotetraose, releasing cellobiose from the non-reducing ends of the chains.. Functionally, the biological conversion of cellulose to glucose generally requires three types of hydrolytic enzymes: (1) Endoglucanases which cut internal beta-1,4-glucosidic bonds; (2) Exocellobiohydrolases that cut the disaccharide cellobiose from the non-reducing end of the cellulose polymer chain; (3) Beta-1,4-glucosidases which hydrolyze the cellobiose and other short cello-oligosaccharides to glucose. This chain is Probable 1,4-beta-D-glucan cellobiohydrolase A (cbhA), found in Aspergillus flavus (strain ATCC 200026 / FGSC A1120 / IAM 13836 / NRRL 3357 / JCM 12722 / SRRC 167).